A 151-amino-acid chain; its full sequence is Large ribosomal subunit protein bL9 (151 aa).

This sequence belongs to the bacterial ribosomal protein bL9 family.

Binds to the 23S rRNA. This chain is Large ribosomal subunit protein bL9, found in Prochlorococcus marinus (strain MIT 9215).